Here is a 94-residue protein sequence, read N- to C-terminus: Small ribosomal subunit protein bS6 (94 aa).

This sequence belongs to the bacterial ribosomal protein bS6 family.

Functionally, binds together with bS18 to 16S ribosomal RNA. This chain is Small ribosomal subunit protein bS6, found in Clostridium botulinum (strain 657 / Type Ba4).